A 313-amino-acid chain; its full sequence is Aspartate carbamoyltransferase catalytic subunit (313 aa).

Carbamoyl phosphate-binding residues include arginine 58 and threonine 59. Lysine 86 is an L-aspartate binding site. Residues arginine 108, histidine 136, and glutamine 139 each contribute to the carbamoyl phosphate site. L-aspartate is bound by residues arginine 169 and arginine 223. Carbamoyl phosphate-binding residues include glycine 265 and proline 266.

It belongs to the aspartate/ornithine carbamoyltransferase superfamily. ATCase family. Heterododecamer (2C3:3R2) of six catalytic PyrB chains organized as two trimers (C3), and six regulatory PyrI chains organized as three dimers (R2).

It catalyses the reaction carbamoyl phosphate + L-aspartate = N-carbamoyl-L-aspartate + phosphate + H(+). The protein operates within pyrimidine metabolism; UMP biosynthesis via de novo pathway; (S)-dihydroorotate from bicarbonate: step 2/3. Functionally, catalyzes the condensation of carbamoyl phosphate and aspartate to form carbamoyl aspartate and inorganic phosphate, the committed step in the de novo pyrimidine nucleotide biosynthesis pathway. The chain is Aspartate carbamoyltransferase catalytic subunit from Anaeromyxobacter sp. (strain K).